The sequence spans 120 residues: Ribosome-binding factor A (120 aa).

This sequence belongs to the RbfA family. Monomer. Binds 30S ribosomal subunits, but not 50S ribosomal subunits or 70S ribosomes.

It localises to the cytoplasm. Its function is as follows. One of several proteins that assist in the late maturation steps of the functional core of the 30S ribosomal subunit. Associates with free 30S ribosomal subunits (but not with 30S subunits that are part of 70S ribosomes or polysomes). Required for efficient processing of 16S rRNA. May interact with the 5'-terminal helix region of 16S rRNA. This is Ribosome-binding factor A from Rickettsia africae (strain ESF-5).